The following is a 136-amino-acid chain: Non-structural protein 1 (136 aa).

The protein belongs to the pneumovirus non-structural protein 1 family. Monomer. Homomultimer. Heteromultimer with NS2. Interacts with the matrix protein M. Interacts with host ELOC and CUL2; this interaction allows NS1 to form an active E3 ligase with ELOC and CUL2. Interacts with host IRF3; this interaction leads to the disrupted association of IRF3 with CREBBP and thus reduced binding of IRF3 to the IFN-beta promoter. Interacts with host MAVS; this interaction prevents MAVS binding to RIGI and inhibits signaling pathway leading to interferon production. Interacts with host TRIM25 (via SPRY domain); this interaction suppresses RIGI ubiquitination and results in decreased interaction between RIGI and MAVS.

The protein resides in the host cytoplasm. It is found in the host mitochondrion. It localises to the host nucleus. In terms of biological role, plays a major role in antagonizing the type I IFN-mediated antiviral response by degrading or inhibiting multiple cellular factors required for either IFN induction or response pathways. Acts cooperatively with NS2 to repress activation and nuclear translocation of host IFN-regulatory factor IRF3. Also disrupts the association of IRF3 with CREBBP. Interacts with host mitochondrial-associated membrane (MAM) MAVS and prevents the interaction with RIGI. Interacts with TRIM25 to suppress TRIM25-mediated RIGI ubiquitination and thereby RIGI-MAVS interaction. Together with NS2, participates in the proteasomal degradation of host STAT2, IRF3, IRF7, TBK1 and RIGI through a NS-degradasome involving CUL2 and Elongin-C. The degradasome requires an intact mitochondrial MAVS. Decreases the levels of host TRAF3 and IKBKE/IKK-epsilon. As functions other than disruptions of the type I IFN-mediated antiviral signaling pathways, induces host SOCS1 and SOCS3 expression. Suppresses premature apoptosis by an NF-kappa-B-dependent, interferon-independent mechanism and thus facilitates virus growth. Additionally, NS1 may serve some inhibitory role in viral transcription and RNA replication. Suppresses proliferation and activation of host CD103+ CD8+ cytotoxic T-lymphocytes and Th17 helper T-lymphocytes. The sequence is that of Non-structural protein 1 (1C) from Ovis aries (Sheep).